A 282-amino-acid chain; its full sequence is HTH-type transcriptional activator RhaR (282 aa).

The region spanning 179–277 (DKLITRLAAS…GMTPSQWRHL (99 aa)) is the HTH araC/xylS-type domain. DNA-binding regions (H-T-H motif) lie at residues 196-217 (DKFC…RQQT) and 244-267 (ISDI…TRET).

Binds DNA as a dimer.

The protein resides in the cytoplasm. Its function is as follows. Activates expression of the rhaSR operon in response to L-rhamnose. The protein is HTH-type transcriptional activator RhaR of Escherichia coli (strain K12 / MC4100 / BW2952).